A 262-amino-acid chain; its full sequence is Type III pantothenate kinase (262 aa).

Residue 12 to 19 participates in ATP binding; sequence DIGNTSIA. Substrate contacts are provided by residues tyrosine 94 and 109 to 112; that span reads GSDV. Catalysis depends on aspartate 111, which acts as the Proton acceptor. A K(+)-binding site is contributed by aspartate 132. Threonine 135 contacts ATP. Residue threonine 187 participates in substrate binding.

Belongs to the type III pantothenate kinase family. Homodimer. NH4(+) is required as a cofactor. K(+) serves as cofactor.

The protein localises to the cytoplasm. It catalyses the reaction (R)-pantothenate + ATP = (R)-4'-phosphopantothenate + ADP + H(+). It functions in the pathway cofactor biosynthesis; coenzyme A biosynthesis; CoA from (R)-pantothenate: step 1/5. Catalyzes the phosphorylation of pantothenate (Pan), the first step in CoA biosynthesis. The polypeptide is Type III pantothenate kinase (Borrelia garinii subsp. bavariensis (strain ATCC BAA-2496 / DSM 23469 / PBi) (Borreliella bavariensis)).